Here is a 270-residue protein sequence, read N- to C-terminus: Formamidopyrimidine-DNA glycosylase (270 aa).

The active-site Schiff-base intermediate with DNA is proline 2. Glutamate 3 (proton donor) is an active-site residue. The active-site Proton donor; for beta-elimination activity is the lysine 58. Residues histidine 91, arginine 110, and arginine 151 each contribute to the DNA site. An FPG-type zinc finger spans residues alanine 236–arginine 270. Arginine 260 functions as the Proton donor; for delta-elimination activity in the catalytic mechanism.

It belongs to the FPG family. In terms of assembly, monomer. It depends on Zn(2+) as a cofactor.

It catalyses the reaction Hydrolysis of DNA containing ring-opened 7-methylguanine residues, releasing 2,6-diamino-4-hydroxy-5-(N-methyl)formamidopyrimidine.. The enzyme catalyses 2'-deoxyribonucleotide-(2'-deoxyribose 5'-phosphate)-2'-deoxyribonucleotide-DNA = a 3'-end 2'-deoxyribonucleotide-(2,3-dehydro-2,3-deoxyribose 5'-phosphate)-DNA + a 5'-end 5'-phospho-2'-deoxyribonucleoside-DNA + H(+). Involved in base excision repair of DNA damaged by oxidation or by mutagenic agents. Acts as a DNA glycosylase that recognizes and removes damaged bases. Has a preference for oxidized purines, such as 7,8-dihydro-8-oxoguanine (8-oxoG). Has AP (apurinic/apyrimidinic) lyase activity and introduces nicks in the DNA strand. Cleaves the DNA backbone by beta-delta elimination to generate a single-strand break at the site of the removed base with both 3'- and 5'-phosphates. The protein is Formamidopyrimidine-DNA glycosylase of Acidithiobacillus ferrooxidans (strain ATCC 23270 / DSM 14882 / CIP 104768 / NCIMB 8455) (Ferrobacillus ferrooxidans (strain ATCC 23270)).